Here is a 115-residue protein sequence, read N- to C-terminus: Macroconotoxin Mu8.1 (115 aa).

The signal sequence occupies residues 1–21 (MDMKMTFSGLVLVVLVTTVVG). The propeptide occupies 22–26 (SSVRR). 5 disulfide bridges follow: C36–C77, C44–C60, C48–C56, C83–C115, and C87–C97. E40 contacts Zn(2+). A Zn(2+)-binding site is contributed by H68.

In terms of assembly, mostly found as a homodimer in solution; non-covalently bound. In terms of tissue distribution, expressed by the venom duct.

Its subcellular location is the secreted. Functionally, modestly and reversibly inhibits Cav2.3/CACNA1E (IC(50)=5.8 uM) recombinantly expressed in HEK293 cells without affecting the voltage dependence of activation. In mouse DRG sensory neurons, modulates depolarization-induced calcium influx. The protein is Macroconotoxin Mu8.1 of Conus mucronatus (Pointed cone).